The sequence spans 216 residues: Octanoyltransferase (216 aa).

The BPL/LPL catalytic domain maps to 34–209 (ENTIDEIWLV…KMNQQLDYSH (176 aa)). Substrate contacts are provided by residues 73-80 (RGGQITFH), 140-142 (SLG), and 153-155 (GLA). Cysteine 171 acts as the Acyl-thioester intermediate in catalysis.

It belongs to the LipB family.

It is found in the cytoplasm. The catalysed reaction is octanoyl-[ACP] + L-lysyl-[protein] = N(6)-octanoyl-L-lysyl-[protein] + holo-[ACP] + H(+). It participates in protein modification; protein lipoylation via endogenous pathway; protein N(6)-(lipoyl)lysine from octanoyl-[acyl-carrier-protein]: step 1/2. In terms of biological role, catalyzes the transfer of endogenously produced octanoic acid from octanoyl-acyl-carrier-protein onto the lipoyl domains of lipoate-dependent enzymes. Lipoyl-ACP can also act as a substrate although octanoyl-ACP is likely to be the physiological substrate. In Psychromonas ingrahamii (strain DSM 17664 / CCUG 51855 / 37), this protein is Octanoyltransferase.